The sequence spans 428 residues: Stabilizer of axonemal microtubules 4 (428 aa).

The segment at 201 to 231 (AKEETGFTEESNKNPIVFQPPSQALPGDPVL) is disordered.

Microtubule inner protein component of sperm flagellar doublet microtubules. Interacts with PPP1CA.

It is found in the cell projection. The protein resides in the cilium. The protein localises to the cytoplasm. Its subcellular location is the cytoskeleton. It localises to the flagellum axoneme. This is Stabilizer of axonemal microtubules 4 from Bos taurus (Bovine).